Here is a 465-residue protein sequence, read N- to C-terminus: tRNA-2-methylthio-N(6)-dimethylallyladenosine synthase (465 aa).

The MTTase N-terminal domain occupies Met26–Arg141. [4Fe-4S] cluster contacts are provided by Cys35, Cys71, Cys104, Cys173, Cys177, and Cys180. Positions Pro159–Arg388 constitute a Radical SAM core domain. One can recognise a TRAM domain in the interval Leu391–Gly453.

Belongs to the methylthiotransferase family. MiaB subfamily. In terms of assembly, monomer. The cofactor is [4Fe-4S] cluster.

The protein localises to the cytoplasm. The enzyme catalyses N(6)-dimethylallyladenosine(37) in tRNA + (sulfur carrier)-SH + AH2 + 2 S-adenosyl-L-methionine = 2-methylsulfanyl-N(6)-dimethylallyladenosine(37) in tRNA + (sulfur carrier)-H + 5'-deoxyadenosine + L-methionine + A + S-adenosyl-L-homocysteine + 2 H(+). Its function is as follows. Catalyzes the methylthiolation of N6-(dimethylallyl)adenosine (i(6)A), leading to the formation of 2-methylthio-N6-(dimethylallyl)adenosine (ms(2)i(6)A) at position 37 in tRNAs that read codons beginning with uridine. The polypeptide is tRNA-2-methylthio-N(6)-dimethylallyladenosine synthase (Thermus thermophilus (strain ATCC 27634 / DSM 579 / HB8)).